The following is a 560-amino-acid chain: Transcription termination factor 5, mitochondrial (560 aa).

A mitochondrion-targeting transit peptide spans M1–M23. The disordered stretch occupies residues M23–E47.

Belongs to the mTERF family. As to quaternary structure, probably binds to the mTTF-DNA complex.

It is found in the mitochondrion. Its function is as follows. Binds promoter DNA and regulates initiation of transcription. Regulates mitochondrial replication and transcription. Required for normal topology and maintenance of mitochondrial DNA (mtDNA) levels. Regulates mtDNA replication by re-activating replication after replication pausing. Likely to regulate replication pausing by coordinating with the mitochondrial termination factor mTTF which promotes replication pausing. Their function in replication pausing prevents unregulated replication that may occur for example by collisions between the machineries of DNA replication and transcription during mtDNA synthesis. This ensures the incorporation of RNA transcripts into replication intermediates at the replication fork and allows for proper fork progression. Possibly functions downstream of Dref which activates genes involved in mtDNA replication and maintenance. The chain is Transcription termination factor 5, mitochondrial from Drosophila melanogaster (Fruit fly).